Here is a 203-residue protein sequence, read N- to C-terminus: MIGRLRGIILEKQPPLVLLETGGVGYEVHMPMTCFYELPDAGKEAIIFTQFVVREDAQLLYGFNNKQERMLFRELIKTNGVGPKLALAILSGMSAHQFVNAVEREDPAALIKLPGIGKKTAERLIVEMKDRFKGLHGDLFTPAADLVLTSPNGPTSDDAEQEAVAALVALGYKPQEASRMVSKIAKPDANSETLIREALRAAL.

The segment at 1-64 (MIGRLRGIIL…EDAQLLYGFN (64 aa)) is domain I. Residues 65-142 (NKQERMLFRE…KGLHGDLFTP (78 aa)) are domain II. Residues 143–154 (AADLVLTSPNGP) are flexible linker. Residues 155–203 (TSDDAEQEAVAALVALGYKPQEASRMVSKIAKPDANSETLIREALRAAL) are domain III.

The protein belongs to the RuvA family. As to quaternary structure, homotetramer. Forms an RuvA(8)-RuvB(12)-Holliday junction (HJ) complex. HJ DNA is sandwiched between 2 RuvA tetramers; dsDNA enters through RuvA and exits via RuvB. An RuvB hexamer assembles on each DNA strand where it exits the tetramer. Each RuvB hexamer is contacted by two RuvA subunits (via domain III) on 2 adjacent RuvB subunits; this complex drives branch migration. In the full resolvosome a probable DNA-RuvA(4)-RuvB(12)-RuvC(2) complex forms which resolves the HJ.

It localises to the cytoplasm. In terms of biological role, the RuvA-RuvB-RuvC complex processes Holliday junction (HJ) DNA during genetic recombination and DNA repair, while the RuvA-RuvB complex plays an important role in the rescue of blocked DNA replication forks via replication fork reversal (RFR). RuvA specifically binds to HJ cruciform DNA, conferring on it an open structure. The RuvB hexamer acts as an ATP-dependent pump, pulling dsDNA into and through the RuvAB complex. HJ branch migration allows RuvC to scan DNA until it finds its consensus sequence, where it cleaves and resolves the cruciform DNA. The chain is Holliday junction branch migration complex subunit RuvA from Enterobacter sp. (strain 638).